A 327-amino-acid chain; its full sequence is Pyruvate dehydrogenase E1 component subunit beta (327 aa).

Glutamate 60 lines the thiamine diphosphate pocket. K(+) is bound by residues isoleucine 113, alanine 161, isoleucine 162, and asparagine 166.

As to quaternary structure, heterodimer of an alpha and a beta chain. Requires thiamine diphosphate as cofactor.

It is found in the plastid. It localises to the chloroplast. The enzyme catalyses N(6)-[(R)-lipoyl]-L-lysyl-[protein] + pyruvate + H(+) = N(6)-[(R)-S(8)-acetyldihydrolipoyl]-L-lysyl-[protein] + CO2. Its function is as follows. The pyruvate dehydrogenase complex catalyzes the overall conversion of pyruvate to acetyl-CoA and CO(2). It contains multiple copies of three enzymatic components: pyruvate dehydrogenase (E1), dihydrolipoamide acetyltransferase (E2) and lipoamide dehydrogenase (E3). The sequence is that of Pyruvate dehydrogenase E1 component subunit beta (pdhB) from Mesostigma viride (Green alga).